A 425-amino-acid polypeptide reads, in one-letter code: Histidine--tRNA ligase (425 aa).

The protein belongs to the class-II aminoacyl-tRNA synthetase family. Homodimer.

The protein localises to the cytoplasm. The enzyme catalyses tRNA(His) + L-histidine + ATP = L-histidyl-tRNA(His) + AMP + diphosphate + H(+). This is Histidine--tRNA ligase from Aeromonas hydrophila subsp. hydrophila (strain ATCC 7966 / DSM 30187 / BCRC 13018 / CCUG 14551 / JCM 1027 / KCTC 2358 / NCIMB 9240 / NCTC 8049).